A 377-amino-acid polypeptide reads, in one-letter code: Mitochondrial pyrimidine nucleotide transporter RIM2 (377 aa).

Solcar repeat units lie at residues Val50–Met163, Glu173–Leu262, and Lys286–Leu375. Transmembrane regions (helical) follow at residues Trp53–Phe73, Gly131–Ser151, Leu179–Ile199, Gly238–Gln258, Lys286–Thr306, and Met347–Thr368.

It belongs to the mitochondrial carrier (TC 2.A.29) family.

Its subcellular location is the mitochondrion inner membrane. The catalysed reaction is 5-methyl-UTP(out) + UTP(in) = 5-methyl-UTP(in) + UTP(out). Functionally, mitochondrial transporter that imports/exports pyrimidine nucleotides into and from mitochondria. Selectively transports uridine, thymidine, and cytosine (deoxy)nucleoside di- and triphosphates by an antiport mechanism. Also transports, with lower efficiency, uridine, thymidine, and cytosine (deoxy)nucleoside monophosphates as well as guanosine (deoxy)nucleoside di- and triphosphate. May import (deoxy)nucleoside triphosphates in exchange for intramitochondrial (deoxy)nucleoside monophosphates, thus providing precursors necessary for de novo synthesis of mitochondrial DNA and RNA while exporting products of their catabolism. Mediates the transport of iron and other divalent metal ions like copper and zinc across the mitochondrial inner membrane in a pyrimidine nucleotide-dependent fashion. Catalyzes the co-import of pyrimidine nucleotides and divalent metal ions including ferrous iron. Participates in mitochondrial genome maintenance, regulation of mitochondrial membrane potential and mitochondrial respiration. This Saccharomyces cerevisiae (strain ATCC 204508 / S288c) (Baker's yeast) protein is Mitochondrial pyrimidine nucleotide transporter RIM2 (RIM2).